A 286-amino-acid chain; its full sequence is 4-diphosphocytidyl-2-C-methyl-D-erythritol kinase (286 aa).

Lys-13 is an active-site residue. 101 to 111 (PQGAGLGGGSS) contributes to the ATP binding site. Asp-143 is a catalytic residue.

It belongs to the GHMP kinase family. IspE subfamily.

The catalysed reaction is 4-CDP-2-C-methyl-D-erythritol + ATP = 4-CDP-2-C-methyl-D-erythritol 2-phosphate + ADP + H(+). The protein operates within isoprenoid biosynthesis; isopentenyl diphosphate biosynthesis via DXP pathway; isopentenyl diphosphate from 1-deoxy-D-xylulose 5-phosphate: step 3/6. In terms of biological role, catalyzes the phosphorylation of the position 2 hydroxy group of 4-diphosphocytidyl-2C-methyl-D-erythritol. The protein is 4-diphosphocytidyl-2-C-methyl-D-erythritol kinase of Idiomarina loihiensis (strain ATCC BAA-735 / DSM 15497 / L2-TR).